The sequence spans 1480 residues: Cystic fibrosis transmembrane conductance regulator (1480 aa).

The Cytoplasmic segment spans residues 1–77 (MQRSPLEKAS…KLINALRRCF (77 aa)). The helical transmembrane segment at 78 to 98 (FWRFMFYGIFLYLGEVTKAVQ) threads the bilayer. The 285-residue stretch at 81-365 (FMFYGIFLYL…WAVQTWYDSL (285 aa)) folds into the ABC transmembrane type-1 1 domain. Over 99 to 122 (PLLLGRIIASYDPDNKEERSIAIY) the chain is Extracellular. The chain crosses the membrane as a helical span at residues 123–146 (LGIGLCLLFIVRTLLLHPAIFGLH). Over 147–195 (HIGMQMRIAMFSLIYKKTLKLSSRVLDKISIGQLVSLLSNNLNKFDEGL) the chain is Cytoplasmic. A helical membrane pass occupies residues 196–216 (ALAHFVWIAPLQVALLMGLIW). Residues 217–222 (ELLQAS) lie on the Extracellular side of the membrane. A helical transmembrane segment spans residues 223-243 (AFCGLGFLIVLALFQAGLGRM). The Cytoplasmic segment spans residues 244–298 (MMKYRDQRAGKISERLVITSEMIENIQSVKAYCWEEAMEKMIENLRQTELKLTRK). Residues 299 to 319 (AAYVRYFNSSAFFFSGFFVVF) traverse the membrane as a helical segment. At 320–339 (LSVLPYALIKGIILRKIFTT) the chain is on the extracellular side. The helical transmembrane segment at 340–358 (ISFCIVLRMAVTRQFPWAV) threads the bilayer. The Cytoplasmic segment spans residues 359-858 (QTWYDSLGAI…YLRYITVHKS (500 aa)). ATP contacts are provided by residues tryptophan 401, serine 434, 458 to 465 (GSTGAGKT), and glutamine 493. An ABC transporter 1 domain is found at 423–646 (NGDDSLFFSN…RPDFSSKLMG (224 aa)). Residue cysteine 524 is the site of S-palmitoyl cysteine attachment. 2 positions are modified to phosphoserine: serine 549 and serine 660. The interval 654 to 831 (SAERRNSILT…EEINEEDLKE (178 aa)) is disordered R region. Phosphoserine; by PKA is present on serine 670. Serine 686 carries the post-translational modification Phosphoserine. A Glycyl lysine isopeptide (Lys-Gly) (interchain with G-Cter in ubiquitin) cross-link involves residue lysine 688. Phosphoserine occurs at positions 700 and 712. Threonine 717 is subject to Phosphothreonine. 6 positions are modified to phosphoserine: serine 737, serine 753, serine 768, serine 790, serine 795, and serine 813. A helical transmembrane segment spans residues 859-879 (LIFVLIWCLVIFLAEVAASLV). One can recognise an ABC transmembrane type-1 2 domain in the interval 859 to 1155 (LIFVLIWCLV…AVNSSIDVDS (297 aa)). Over 880–918 (VLWLLGNTPLQDKGNSTHSRNNSYAVIITSTSSYYVFYI) the chain is Extracellular. Asparagine 894 and asparagine 900 each carry an N-linked (GlcNAc...) asparagine glycan. The chain crosses the membrane as a discontinuously helical span at residues 919–939 (YVGVADTLLAMGFFRGLPLVH). Residues 940–990 (TLITVSKILHHKMLHSVLQAPMSTLNTLKAGGILNRFSKDIAILDDLLPLT) are Cytoplasmic-facing. A helical membrane pass occupies residues 991 to 1011 (IFDFIQLLLIVIGAIAVVAVL). At 1012 to 1013 (QP) the chain is on the extracellular side. The helical transmembrane segment at 1014–1034 (YIFVATVPVIVAFIMLRAYFL) threads the bilayer. Over 1035-1095 (QTSQQLKQLE…TANWFLYLST (61 aa)) the chain is Cytoplasmic. The chain crosses the membrane as a helical span at residues 1096 to 1116 (LRWFQMRIEMIFVIFFIAVTF). The Extracellular segment spans residues 1117 to 1130 (ISILTTGEGEGRVG). A helical transmembrane segment spans residues 1131 to 1151 (IILTLAMNIMSTLQWAVNSSI). Residues 1152–1480 (DVDSLMRSVS…TEEEVQDTRL (329 aa)) are Cytoplasmic-facing. An ABC transporter 2 domain is found at 1210–1443 (MTVKDLTAKY…RSLFRQAISP (234 aa)). ATP-binding positions include tyrosine 1219 and 1244-1251 (GRTGSGKS). The interval 1386 to 1480 (RTLKQAFADC…TEEEVQDTRL (95 aa)) is interaction with GORASP2. Residue cysteine 1395 is the site of S-palmitoyl cysteine attachment. 2 positions are modified to phosphoserine: serine 1444 and serine 1456. Positions 1452–1480 (HRNSSKCKSKPQIAALKEETEEEVQDTRL) are disordered. Positions 1470–1480 (ETEEEVQDTRL) are enriched in acidic residues. The PDZ-binding signature appears at 1478–1480 (TRL).

It belongs to the ABC transporter superfamily. ABCC family. CFTR transporter (TC 3.A.1.202) subfamily. In terms of assembly, monomer; does not require oligomerization for channel activity. May form oligomers in the membrane. Interacts with SLC26A3, SLC26A6 and NHERF1. Interacts with SHANK2. Interacts with MYO6. Interacts (via C-terminus) with GOPC (via PDZ domain); this promotes CFTR internalization and thereby decreases channel activity. Interacts with SLC4A7 through NHERF1. Found in a complex with MYO5B and RAB11A. Interacts with ANO1. Interacts with SLC26A8. Interacts with AHCYL1; the interaction increases CFTR activity. Interacts with CSE1L. The core-glycosylated form interacts with GORASP2 (via PDZ GRASP-type 1 domain) in respone to ER stress. Interacts with MARCHF2; the interaction leads to CFTR ubiqtuitination and degradation. Interacts with ADGRG2. In terms of processing, N-glycosylated. Phosphorylated; cAMP treatment promotes phosphorylation and activates the channel. Dephosphorylation decreases the ATPase activity (in vitro). Phosphorylation at PKA sites activates the channel. Phosphorylation at PKC sites enhances the response to phosphorylation by PKA. Phosphorylated by AMPK; this inhibits channel activity. Post-translationally, ubiquitinated, leading to its degradation in the lysosome. Deubiquitination by USP10 in early endosomes enhances its endocytic recycling to the cell membrane. Ubiquitinated by RNF185 during ER stress. Ubiquitinated by MARCHF2.

The protein localises to the apical cell membrane. The protein resides in the early endosome membrane. It localises to the cell membrane. It is found in the recycling endosome membrane. Its subcellular location is the endoplasmic reticulum membrane. The protein localises to the nucleus. The enzyme catalyses ATP + H2O + closed Cl(-) channel = ADP + phosphate + open Cl(-) channel.. It carries out the reaction chloride(in) = chloride(out). It catalyses the reaction hydrogencarbonate(in) = hydrogencarbonate(out). The catalysed reaction is ATP + H2O = ADP + phosphate + H(+). Its function is as follows. Epithelial ion channel that plays an important role in the regulation of epithelial ion and water transport and fluid homeostasis. Mediates the transport of chloride ions across the cell membrane. Possesses an intrinsic ATPase activity and utilizes ATP to gate its channel; the passive flow of anions through the channel is gated by cycles of ATP binding and hydrolysis by the ATP-binding domains. The ion channel is also permeable to HCO(3)(-); selectivity depends on the extracellular chloride concentration. Exerts its function also by modulating the activity of other ion channels and transporters. Contributes to the regulation of the pH and the ion content of the epithelial fluid layer. Modulates the activity of the epithelial sodium channel (ENaC) complex, in part by regulating the cell surface expression of the ENaC complex. May regulate bicarbonate secretion and salvage in epithelial cells by regulating the transporter SLC4A7. Can inhibit the chloride channel activity of ANO1. Plays a role in the chloride and bicarbonate homeostasis during sperm epididymal maturation and capacitation. In Pan troglodytes (Chimpanzee), this protein is Cystic fibrosis transmembrane conductance regulator.